The primary structure comprises 59 residues: Large ribosomal subunit protein bL32 (59 aa).

This sequence belongs to the bacterial ribosomal protein bL32 family.

The chain is Large ribosomal subunit protein bL32 from Polynucleobacter necessarius subsp. necessarius (strain STIR1).